The following is a 290-amino-acid chain: Nitrogenase iron protein 2 (290 aa).

Gly10–Ser17 contributes to the ATP binding site. Cys98 contributes to the [4Fe-4S] cluster binding site. Position 101 is an ADP-ribosylarginine; by dinitrogenase reductase ADP-ribosyltransferase (Arg101). [4Fe-4S] cluster is bound at residue Cys133.

This sequence belongs to the NifH/BchL/ChlL family. Homodimer. It depends on [4Fe-4S] cluster as a cofactor. Post-translationally, the reversible ADP-ribosylation of Arg-101 inactivates the nitrogenase reductase and regulates nitrogenase activity.

The enzyme catalyses N2 + 8 reduced [2Fe-2S]-[ferredoxin] + 16 ATP + 16 H2O = H2 + 8 oxidized [2Fe-2S]-[ferredoxin] + 2 NH4(+) + 16 ADP + 16 phosphate + 6 H(+). In terms of biological role, the key enzymatic reactions in nitrogen fixation are catalyzed by the nitrogenase complex, which has 2 components: the iron protein (component 2) and a component 1 which is either a molybdenum-iron protein, a vanadium-iron, or an iron-iron protein. In Azotobacter chroococcum mcd 1, this protein is Nitrogenase iron protein 2 (vnfH).